The sequence spans 300 residues: tRNA dimethylallyltransferase 1 (300 aa).

Residue 13–20 participates in ATP binding; sequence GPTGVGKT. Substrate is bound at residue 15–20; it reads TGVGKT. An interaction with substrate tRNA region spans residues 38–41; that stretch reads DSRQ.

It belongs to the IPP transferase family. Monomer. Mg(2+) is required as a cofactor.

It carries out the reaction adenosine(37) in tRNA + dimethylallyl diphosphate = N(6)-dimethylallyladenosine(37) in tRNA + diphosphate. Functionally, catalyzes the transfer of a dimethylallyl group onto the adenine at position 37 in tRNAs that read codons beginning with uridine, leading to the formation of N6-(dimethylallyl)adenosine (i(6)A). The protein is tRNA dimethylallyltransferase 1 of Porphyromonas gingivalis (strain ATCC BAA-308 / W83).